A 234-amino-acid polypeptide reads, in one-letter code: Accessory gland protein Acp29AB (234 aa).

The first 21 residues, 1-21 (MYATNLLYLLALWNLWLVSGG), serve as a signal peptide directing secretion. Asparagine 29, asparagine 61, asparagine 127, and asparagine 164 each carry an N-linked (GlcNAc...) asparagine glycan. Residues 137–234 (VTCREMNGHL…SFVCQANQWA (98 aa)) enclose the C-type lectin domain. 2 cysteine pairs are disulfide-bonded: cysteine 139–cysteine 228 and cysteine 207–cysteine 220.

Its subcellular location is the secreted. Its function is as follows. Responsible for physiological and behavioral changes in mated female flies. In Drosophila simulans (Fruit fly), this protein is Accessory gland protein Acp29AB (Acp29AB).